We begin with the raw amino-acid sequence, 333 residues long: Zinc-type alcohol dehydrogenase-like protein SACOL2177 (333 aa).

This sequence belongs to the zinc-containing alcohol dehydrogenase family. Quinone oxidoreductase subfamily.

In Staphylococcus aureus (strain COL), this protein is Zinc-type alcohol dehydrogenase-like protein SACOL2177.